We begin with the raw amino-acid sequence, 593 residues long: Cryptochrome-2 (593 aa).

Residues 22 to 151 enclose the Photolyase/cryptochrome alpha/beta domain; that stretch reads ASSVHWFRKG…EVVTENSHTL (130 aa). Lysine 30 participates in a covalent cross-link: Glycyl lysine isopeptide (Lys-Gly) (interchain with G-Cter in ubiquitin). Position 90 is a phosphoserine (serine 90). Glycyl lysine isopeptide (Lys-Gly) (interchain with G-Cter in ubiquitin) cross-links involve residues lysine 126 and lysine 242. Serine 266 bears the Phosphoserine; by MAPK mark. An FAD-binding site is contributed by serine 271. Residue serine 299 is modified to Phosphoserine. Glutamine 308 serves as a coordination point for FAD. A Glycyl lysine isopeptide (Lys-Gly) (interchain with G-Cter in ubiquitin) cross-link involves residue lysine 348. FAD-binding positions include histidine 374 and 406–408; that span reads DAD. A required for inhibition of CLOCK-BMAL1-mediated transcription region spans residues 390–489; sequence WVSWESGVRV…IIGVDYPRPI (100 aa). Residues lysine 475 and lysine 504 each participate in a glycyl lysine isopeptide (Lys-Gly) (interchain with G-Cter in ubiquitin) cross-link. The disordered stretch occupies residues 532 to 593; it reads PVAEPSSSQA…PTPELPSKDA (62 aa). Residues 537–548 are compositionally biased toward low complexity; that stretch reads SSSQAGSMSSAG. Serine 554 carries the phosphoserine; by GSK3-beta modification. Serine 558 carries the phosphoserine; by DYRK1A and MAPK modification.

This sequence belongs to the DNA photolyase class-1 family. In terms of assembly, component of the circadian core oscillator, which includes the CRY proteins, CLOCK or NPAS2, BMAL1 or BMAL2, CSNK1D and/or CSNK1E, TIMELESS, and the PER proteins. Interacts with TIMELESS. Interacts directly with PER1, PER2 and PER3; interaction with PER2 inhibits its ubiquitination and vice versa. Interacts with CLOCK-BMAL1. Interacts with CLOCK. Interacts with BMAL1. Interacts with NFIL3. Interacts with FBXL3. Interacts with FBXL21. FBXL3, PER2 and the cofactor FAD compete for overlapping binding sites. FBXL3 cannot bind CRY2 that interacts already with PER2 or that contains bound FAD. Interacts with PPP5C (via TPR repeats); the interaction down-regulates the PPP5C phosphatase activity on CSNK1E. Interacts with nuclear receptors AR and NR3C1/GR; the interaction is ligand dependent. Interacts with PRKDC and CIART. Interacts with ISCA1 (in vitro). Interacts with DDB1, USP7 and TARDBP. Interacts with HNF4A. Interacts with PPARA. Interacts with PPARD (via domain NR LBD) and NR1I2 (via domain NR LBD) in a ligand-dependent manner. Interacts with PPARG, NR1I3 and VDR in a ligand-dependent manner. It depends on FAD as a cofactor. (6R)-5,10-methylene-5,6,7,8-tetrahydrofolate is required as a cofactor. Phosphorylation on Ser-266 by MAPK is important for the inhibition of CLOCK-BMAL1-mediated transcriptional activity. Phosphorylation by CSKNE requires interaction with PER1 or PER2. Phosphorylated in a circadian manner at Ser-554 and Ser-558 in the suprachiasmatic nucleus (SCN) and liver. Phosphorylation at Ser-558 by DYRK1A promotes subsequent phosphorylation at Ser-554 by GSK3-beta: the two-step phosphorylation at the neighboring Ser residues leads to its proteasomal degradation. In terms of processing, ubiquitinated by the SCF(FBXL3) and SCF(FBXL21) complexes, regulating the balance between degradation and stabilization. The SCF(FBXL3) complex is mainly nuclear and mediates ubiquitination and subsequent degradation of CRY2. In contrast, cytoplasmic SCF(FBXL21) complex-mediated ubiquitination leads to stabilize CRY2 and counteract the activity of the SCF(FBXL3) complex. The SCF(FBXL3) and SCF(FBXL21) complexes probably mediate ubiquitination at different Lys residues. The SCF(FBXL3) complex recognizes and binds CRY2 phosphorylated at Ser-554 and Ser-558. Ubiquitination may be inhibited by PER2. Deubiquitinated by USP7. In terms of tissue distribution, expressed in all tissues examined including fetal brain, fibroblasts, heart, brain, placenta, lung, liver, skeletal muscle, kidney, pancreas, spleen, thymus, prostate, testis, ovary, small intestine, colon and leukocytes. Highest levels in heart and skeletal muscle.

The protein localises to the cytoplasm. It localises to the nucleus. With respect to regulation, KL001 (N-[3-(9H-carbazol-9-yl)-2-hydroxypropyl]-N-(2-furanylmethyl)-methanesulfonamide) binds to CRY1 and stabilizes it by inhibiting FBXL3- and ubiquitin-dependent degradation of CRY1 resulting in lengthening of the circadian periods. Functionally, transcriptional repressor which forms a core component of the circadian clock. The circadian clock, an internal time-keeping system, regulates various physiological processes through the generation of approximately 24 hour circadian rhythms in gene expression, which are translated into rhythms in metabolism and behavior. It is derived from the Latin roots 'circa' (about) and 'diem' (day) and acts as an important regulator of a wide array of physiological functions including metabolism, sleep, body temperature, blood pressure, endocrine, immune, cardiovascular, and renal function. Consists of two major components: the central clock, residing in the suprachiasmatic nucleus (SCN) of the brain, and the peripheral clocks that are present in nearly every tissue and organ system. Both the central and peripheral clocks can be reset by environmental cues, also known as Zeitgebers (German for 'timegivers'). The predominant Zeitgeber for the central clock is light, which is sensed by retina and signals directly to the SCN. The central clock entrains the peripheral clocks through neuronal and hormonal signals, body temperature and feeding-related cues, aligning all clocks with the external light/dark cycle. Circadian rhythms allow an organism to achieve temporal homeostasis with its environment at the molecular level by regulating gene expression to create a peak of protein expression once every 24 hours to control when a particular physiological process is most active with respect to the solar day. Transcription and translation of core clock components (CLOCK, NPAS2, BMAL1, BMAL2, PER1, PER2, PER3, CRY1 and CRY2) plays a critical role in rhythm generation, whereas delays imposed by post-translational modifications (PTMs) are important for determining the period (tau) of the rhythms (tau refers to the period of a rhythm and is the length, in time, of one complete cycle). A diurnal rhythm is synchronized with the day/night cycle, while the ultradian and infradian rhythms have a period shorter and longer than 24 hours, respectively. Disruptions in the circadian rhythms contribute to the pathology of cardiovascular diseases, cancer, metabolic syndromes and aging. A transcription/translation feedback loop (TTFL) forms the core of the molecular circadian clock mechanism. Transcription factors, CLOCK or NPAS2 and BMAL1 or BMAL2, form the positive limb of the feedback loop, act in the form of a heterodimer and activate the transcription of core clock genes and clock-controlled genes (involved in key metabolic processes), harboring E-box elements (5'-CACGTG-3') within their promoters. The core clock genes: PER1/2/3 and CRY1/2 which are transcriptional repressors form the negative limb of the feedback loop and interact with the CLOCK|NPAS2-BMAL1|BMAL2 heterodimer inhibiting its activity and thereby negatively regulating their own expression. This heterodimer also activates nuclear receptors NR1D1/2 and RORA/B/G, which form a second feedback loop and which activate and repress BMAL1 transcription, respectively. CRY1 and CRY2 have redundant functions but also differential and selective contributions at least in defining the pace of the SCN circadian clock and its circadian transcriptional outputs. Less potent transcriptional repressor in cerebellum and liver than CRY1, though less effective in lengthening the period of the SCN oscillator. Seems to play a critical role in tuning SCN circadian period by opposing the action of CRY1. With CRY1, dispensable for circadian rhythm generation but necessary for the development of intercellular networks for rhythm synchrony. May mediate circadian regulation of cAMP signaling and gluconeogenesis by blocking glucagon-mediated increases in intracellular cAMP concentrations and in CREB1 phosphorylation. Besides its role in the maintenance of the circadian clock, is also involved in the regulation of other processes. Plays a key role in glucose and lipid metabolism modulation, in part, through the transcriptional regulation of genes involved in these pathways, such as LEP or ACSL4. Represses glucocorticoid receptor NR3C1/GR-induced transcriptional activity by binding to glucocorticoid response elements (GREs). Represses the CLOCK-BMAL1 induced transcription of BHLHE40/DEC1. Represses the CLOCK-BMAL1 induced transcription of NAMPT. Represses PPARD and its target genes in the skeletal muscle and limits exercise capacity. Represses the transcriptional activity of NR1I2. This is Cryptochrome-2 (CRY2) from Homo sapiens (Human).